Here is a 1005-residue protein sequence, read N- to C-terminus: Espin-like protein (1005 aa).

ANK repeat units follow at residues 1–31, 35–64, 69–99, 103–132, 136–166, 170–200, 204–234, 238–267, 270–299, and 303–332; these read MEAQ…RPDI, LGAG…LPGN, NGAT…GLQD, SGVS…AATL, EGAL…GVNQ, SGAS…DVRL, DGMS…GLTA, EGAT…PIMR, WGGT…DPFL, and DGYT…PVRV. 2 disordered regions span residues 355–383 and 458–480; these read EERR…VPRE and ADHP…AAEQ. Positions 458–469 are enriched in basic and acidic residues; the sequence is ADHPPEDQDQSQ. Residues 502–539 adopt a coiled-coil conformation; sequence EDDLVYLEKQINDLQLRRRCQEYESELGRLAAQLQALL. Disordered stretches follow at residues 611–643, 692–729, 764–794, and 951–975; these read LAQG…QREI, PRGD…GPGL, LEAQ…PRLG, and PHAS…SQGS.

As to quaternary structure, interacts with MYO3A (via C-terminus). Interacts with MYO3B (via C-terminus). Expressed in inner ear hair cells. Expressed in utricle hair bundles (at protein level). Expressed in choclea (at protein level).

The protein resides in the cell projection. It is found in the stereocilium. In terms of biological role, binds to but does not cross-link actin. Required for the formation and maintenance of inner ear hair cell stereocilia and staircase formation. Essential for normal hearing. This Mus musculus (Mouse) protein is Espin-like protein (Espnl).